A 258-amino-acid polypeptide reads, in one-letter code: PF03932 family protein CutC (258 aa).

Belongs to the CutC family.

Its subcellular location is the cytoplasm. The chain is PF03932 family protein CutC from Mesorhizobium japonicum (strain LMG 29417 / CECT 9101 / MAFF 303099) (Mesorhizobium loti (strain MAFF 303099)).